The primary structure comprises 155 residues: MNPLRKKRLLIIVALLAGVGLAVTLALSALQENINLFYTPSQIANGEAPLDTRIRAGGMVEKGSLQRSADSLDVRFVVTDFNKSVTITYRGILPDLFREGQGIVALGKLNAQGVVVADEVLAKHDEKYMPPEVTKALRDSGRAAPAASPTPVKQG.

At 1–8 the chain is on the cytoplasmic side; sequence MNPLRKKR. Residues 9-29 form a helical; Signal-anchor for type II membrane protein membrane-spanning segment; sequence LLIIVALLAGVGLAVTLALSA. Over 30–155 the chain is Periplasmic; it reads LQENINLFYT…AASPTPVKQG (126 aa). Residues histidine 124 and tyrosine 128 each coordinate heme.

It belongs to the CcmE/CycJ family.

It is found in the cell inner membrane. Functionally, heme chaperone required for the biogenesis of c-type cytochromes. Transiently binds heme delivered by CcmC and transfers the heme to apo-cytochromes in a process facilitated by CcmF and CcmH. This is Cytochrome c-type biogenesis protein CcmE from Pseudomonas syringae pv. syringae (strain B728a).